Consider the following 552-residue polypeptide: MRLIVLSLLFTSTLAWFYGRDEPDRWSVGGVWPLPQKIIYGSKNRTLTYDKIGIDLGDKKDCDVLLAMADNYMNKWLFPYPVEMKTGGTEDFIITVTVKEECPGGPPVHGASEEYLLRVSVSEAVINAQTVWGALRAMETLSHLVFYDQKSQEYQIRTAEIFDKPRFPVRGIMIDSSRHFLSLNVIKRQLEIMSMNKLNVLHWHLVDSESFPYTSQKFPELHGVGAYSPRHVYSREDISEVIAFARLRGIRVIPEFDLPGHTSSWKGRKGFLTECFDEKGEETFLPNLVDPMNDANFDFLAEFLEEVTETFPDQFLHLGGDEVSDYIVECWVRNKKIRKFMDEKGFGNNTVLLENYFFEKLFSIVEKLKLKRKPIFWQEVFDNNIPDPNSIIHIWKGNTHEEIYEQVKNITSKNFPVIVSACWYLNYIKYGADWRDEIRGTAPSNSRYYYCDPTSFNGTDTQKNLVLGGIAAIWGELVDNTNIEARLWPRASAAAERLWSPAEKTQKAENAWPRMHELRCRLVSRGYRIQPNNNPDYCPFEFDEPPATKSEL.

Positions 1–15 are cleaved as a signal peptide; it reads MRLIVLSLLFTSTLA. Asn-44 carries N-linked (GlcNAc...) asparagine glycosylation. Glu-322 serves as the catalytic Proton donor. Asn-348, Asn-409, and Asn-457 each carry an N-linked (GlcNAc...) asparagine glycan.

This sequence belongs to the glycosyl hydrolase 20 family.

The protein localises to the lysosome. It carries out the reaction Hydrolysis of terminal non-reducing N-acetyl-D-hexosamine residues in N-acetyl-beta-D-hexosaminides.. Responsible for the degradation of GM2 gangliosides, and a variety of other molecules containing terminal N-acetyl hexosamines. Degrades chitotriose. The protein is Beta-hexosaminidase A of Caenorhabditis briggsae.